The following is a 408-amino-acid chain: Na(+)/H(+) antiporter NhaA (408 aa).

12 consecutive transmembrane segments (helical) span residues 42–62 (LMFVAALALLLANSPFAPVYF), 69–89 (VLGLTVLHWINDALMAVFFLL), 110–130 (ALPGIAALGGMVVPAVIFIAV), 140–160 (GWAIPSATDIAFALGVLSLLG), 169–189 (IFLTALAILDDLGAVLIIALF), 192–212 (AELTPLMLILAAATLLGLAAL), 215–235 (FGVKPLAPYLVLGVVLWFFVL), 238–258 (GIHATLAGVALALAIPLQAST), 277–297 (VAFLIVPVFGFANAGVSFAGL), 312–332 (LGLFFGKQVGVFGFAWLAIWL), 346–366 (LYGVAVLCGIGFTMSLFIGLL), and 380–400 (IGVLLGSTLAGLIGWLILRVT).

Belongs to the NhaA Na(+)/H(+) (TC 2.A.33) antiporter family.

The protein resides in the cell inner membrane. It catalyses the reaction Na(+)(in) + 2 H(+)(out) = Na(+)(out) + 2 H(+)(in). Its function is as follows. Na(+)/H(+) antiporter that extrudes sodium in exchange for external protons. The protein is Na(+)/H(+) antiporter NhaA of Nitrobacter hamburgensis (strain DSM 10229 / NCIMB 13809 / X14).